The chain runs to 30 residues: Cycloviolacin-H1 (30 aa).

A cross-link (cyclopeptide (Gly-Asn)) is located at residues 1 to 30; the sequence is GIPCGESCVYIPCLTSAIGCSCKSKVCYRN. Cystine bridges form between Cys-4/Cys-20, Cys-8/Cys-22, and Cys-13/Cys-27.

The protein belongs to the cyclotide family. Bracelet subfamily. This is a cyclic peptide.

In terms of biological role, probably participates in a plant defense mechanism. The protein is Cycloviolacin-H1 of Viola hederacea (Australian violet).